The following is an 836-amino-acid chain: Enhancer of polycomb homolog 1 (836 aa).

A Glycyl lysine isopeptide (Lys-Gly) (interchain with G-Cter in SUMO2) cross-link involves residue Lys319. Disordered stretches follow at residues 335-360 (KRKY…SPAA) and 372-401 (YDFP…PDGP). Residues 346-360 (PSSAAATPQQTSPAA) are compositionally biased toward low complexity. The residue at position 539 (Ser539) is a Phosphoserine. Residue Lys673 forms a Glycyl lysine isopeptide (Lys-Gly) (interchain with G-Cter in SUMO2) linkage. The segment at 802–829 (VPSSSSVDSVPRENHESEKPALNNIADN) is disordered. A compositionally biased stretch (basic and acidic residues) spans 811–820 (VPRENHESEK).

This sequence belongs to the enhancer of polycomb family. In terms of assembly, component of the NuA4 histone acetyltransferase complex which contains the catalytic subunit KAT5/TIP60 and the subunits EP400, TRRAP/PAF400, BRD8/SMAP, EPC1, DMAP1/DNMAP1, RUVBL1/TIP49, RUVBL2, ING3, actin, ACTL6A/BAF53A, MORF4L1/MRG15, MORF4L2/MRGX, MRGBP, YEATS4/GAS41, VPS72/YL1 and MEAF6. KAT5/TIP60, EPC1, and ING3 together constitute a minimal HAT complex termed Piccolo NuA4. Component of a NuA4-related complex which contains EP400, TRRAP/PAF400, SRCAP, BRD8/SMAP, EPC1, DMAP1/DNMAP1, RUVBL1/TIP49, RUVBL2, actin, ACTL6A/BAF53A, VPS72 and YEATS4/GAS41. Interacts with TRIM27. Interacts with MBTD1; interaction is direct and promotes recruitment of MBTD1 into the NuA4 histone acetyltransferase complex.

The protein resides in the nucleus. It is found in the cytoplasm. Its function is as follows. Component of the NuA4 histone acetyltransferase (HAT) complex, a multiprotein complex involved in transcriptional activation of select genes principally by acetylation of nucleosomal histones H4 and H2A. The NuA4 complex plays a direct role in repair of DNA double-strand breaks (DSBs) by promoting homologous recombination (HR). The NuA4 complex is also required for spermatid development by promoting acetylation of histones: histone acetylation is required for histone replacement during the transition from round to elongating spermatids. In the NuA4 complex, EPC1 is required to recruit MBTD1 into the complex. This is Enhancer of polycomb homolog 1 from Homo sapiens (Human).